Reading from the N-terminus, the 221-residue chain is Thiamine-phosphate synthase (221 aa).

4-amino-2-methyl-5-(diphosphooxymethyl)pyrimidine is bound by residues 47-51 (QYREK) and asparagine 79. Residues aspartate 80 and aspartate 99 each coordinate Mg(2+). Threonine 118 contacts 4-amino-2-methyl-5-(diphosphooxymethyl)pyrimidine. Residue 144–146 (SFT) participates in 2-[(2R,5Z)-2-carboxy-4-methylthiazol-5(2H)-ylidene]ethyl phosphate binding. Lysine 147 is a binding site for 4-amino-2-methyl-5-(diphosphooxymethyl)pyrimidine. 2-[(2R,5Z)-2-carboxy-4-methylthiazol-5(2H)-ylidene]ethyl phosphate is bound by residues glycine 175 and 195–196 (VT).

It belongs to the thiamine-phosphate synthase family. It depends on Mg(2+) as a cofactor.

It carries out the reaction 2-[(2R,5Z)-2-carboxy-4-methylthiazol-5(2H)-ylidene]ethyl phosphate + 4-amino-2-methyl-5-(diphosphooxymethyl)pyrimidine + 2 H(+) = thiamine phosphate + CO2 + diphosphate. The enzyme catalyses 2-(2-carboxy-4-methylthiazol-5-yl)ethyl phosphate + 4-amino-2-methyl-5-(diphosphooxymethyl)pyrimidine + 2 H(+) = thiamine phosphate + CO2 + diphosphate. The catalysed reaction is 4-methyl-5-(2-phosphooxyethyl)-thiazole + 4-amino-2-methyl-5-(diphosphooxymethyl)pyrimidine + H(+) = thiamine phosphate + diphosphate. The protein operates within cofactor biosynthesis; thiamine diphosphate biosynthesis; thiamine phosphate from 4-amino-2-methyl-5-diphosphomethylpyrimidine and 4-methyl-5-(2-phosphoethyl)-thiazole: step 1/1. Its function is as follows. Condenses 4-methyl-5-(beta-hydroxyethyl)thiazole monophosphate (THZ-P) and 2-methyl-4-amino-5-hydroxymethyl pyrimidine pyrophosphate (HMP-PP) to form thiamine monophosphate (TMP). In Caldicellulosiruptor saccharolyticus (strain ATCC 43494 / DSM 8903 / Tp8T 6331), this protein is Thiamine-phosphate synthase.